The sequence spans 927 residues: Phosphoenolpyruvate carboxylase (927 aa).

Active-site residues include His160 and Lys589.

Belongs to the PEPCase type 1 family. Mg(2+) serves as cofactor.

The enzyme catalyses oxaloacetate + phosphate = phosphoenolpyruvate + hydrogencarbonate. In terms of biological role, forms oxaloacetate, a four-carbon dicarboxylic acid source for the tricarboxylic acid cycle. This chain is Phosphoenolpyruvate carboxylase, found in Rhodopseudomonas palustris (strain BisA53).